The primary structure comprises 116 residues: NADH-ubiquinone oxidoreductase chain 3 (116 aa).

3 helical membrane passes run 3 to 23, 56 to 76, and 85 to 105; these read LVIS…VVSF, FFLV…LLAL, and ATGT…GLIY.

This sequence belongs to the complex I subunit 3 family.

Its subcellular location is the mitochondrion membrane. It catalyses the reaction a ubiquinone + NADH + 5 H(+)(in) = a ubiquinol + NAD(+) + 4 H(+)(out). Core subunit of the mitochondrial membrane respiratory chain NADH dehydrogenase (Complex I) that is believed to belong to the minimal assembly required for catalysis. Complex I functions in the transfer of electrons from NADH to the respiratory chain. The immediate electron acceptor for the enzyme is believed to be ubiquinone. The polypeptide is NADH-ubiquinone oxidoreductase chain 3 (MT-ND3) (Formosania lacustris (Oriental stream loach)).